The following is a 65-amino-acid chain: Probable movement protein p8 (65 aa).

Polar residues predominate over residues 1–10; that stretch reads MENTENVRSG. The segment at 1–47 is disordered; it reads MENTENVRSGRNQREYSKERQQEGGYKEVSKAAVRKEGDVKQDMGPS. Positions 12–42 are enriched in basic and acidic residues; it reads NQREYSKERQQEGGYKEVSKAAVRKEGDVKQ.

It belongs to the carmovirus/necrovirus/panicovirus movement protein p8 family.

Functionally, cell-to-cell movement. This is Probable movement protein p8 from Tobacco necrosis virus (strain D) (TNV-D).